Reading from the N-terminus, the 1053-residue chain is MTPKPNTSNPNVGLPLLSKDSPDIESLLILNPKVQSKANAVPSAVTKKNKHNWKRNEEKGCGASCGESKLKNDFRDIKHTTLSERGALKEAMRCLKCADAPCQKSCPTQLDIKSFITSISNKNYYGAARAILSDNPLGLTCGMICPTSDLCVGSCNLQASEEGAINIGGLQQYACDVFKQMNVRQIVSKEVRENRNASHKEQIALIGCGPASISCASFLARLGYTDITIYEKRAYIGGLSSAEIPQFRLPYDVVDFEIQLARDVGVKIETNRSLCKEDITLDKLKSQGAAAVFIGIGNPEPKIDPLFEGLTIENGFYTSKNYLPAVAAASKPGMCGCKRTPLPTMRGRVVVLGAGDTAMDCATSALRCGASRVTIAFRKGFTGIRAVPEEMEAAKEEKCEFLPFSAPRKINVKDGRIVSIEFNKTEQDDNGKWYEDEEQIVILKCDYVISAFGSTLKEDTVLSALQPCKLNKWGGIEVDSTTQQTSEAWVFAGGDVAGVAETTVESVNDGKTLMDLTFKIQIAAWNMHRYIQAKHGNVLGETPELPKFFTPIDEVDISVDMCGVKFENPFGLASAPPTTSGPMCRRAFEQGWGFILTKTYGLDKDLVTNVSPRIVRGSTSGPLYGPNQGSFMNIELISEKSCEYWLQCIRELKRDHPTKIVVASIMCVYNKEDWIELATKSEAAGADILELNLSCPHGMGEKGMGLACGQSPEIVKEICRWVRACVKIPFFPKMTPNITDVREIARAARDGGASGVTATNTVSSLMHMKADGNAWPAIGNTKRTTYGGMSGSAIRPIAMKAVSSIANELDGFPIMATGGIESAETGLGFLMAGASVLQVCSAVQNQDFTVVEDYCTGLKALLYLSGAESLKEWDGQSPPVEKHQKGKPILLQGQKNMPFFGKFRDEREKLEALKLSESNLLDTDNYHFASRPDTQVARVPTVEDVIEHEVAIIDHDMCINCGKCYMTCNDSGYQAITFDAVTHQPHVTEDDCTGCTLCYSVCPIPECIQMVPRKGPWKAPKRGVKPTVEPGTPKVVKVDQRGRVILESTGGMQ.

A 4Fe-4S ferredoxin-type 1 domain is found at 84 to 115 (ERGALKEAMRCLKCADAPCQKSCPTQLDIKSF). 8 residues coordinate [4Fe-4S] cluster: cysteine 94, cysteine 97, cysteine 102, cysteine 106, cysteine 145, cysteine 151, cysteine 155, and glutamine 171. Residues 207–211 (GCGPA), 231–239 (EKRAYIGGL), arginine 248, and leucine 274 contribute to the FAD site. NADP(+) contacts are provided by residues 354-357 (AGDT), 378-379 (RK), arginine 385, 451-453 (AFG), and 495-501 (DVAGVAE). 494–503 (GDVAGVAETT) serves as a coordination point for FAD. FMN is bound by residues serine 574 and 598–599 (KT). Substrate is bound by residues asparagine 633 and 692 to 694 (NLS). Cysteine 695 functions as the Proton acceptor in the catalytic mechanism. Lysine 733 provides a ligand contact to FMN. Substrate is bound at residue 760 to 761 (NT). FMN is bound by residues glycine 791, 817–819 (TGG), and 840–841 (CS). 2 consecutive 4Fe-4S ferredoxin-type domains span residues 949-981 (EVAI…FDAV) and 983-1013 (HQPH…MVPR). [4Fe-4S] cluster contacts are provided by cysteine 958, cysteine 961, cysteine 964, cysteine 968, cysteine 992, cysteine 995, cysteine 998, and cysteine 1002.

The protein belongs to the dihydropyrimidine dehydrogenase family. [4Fe-4S] cluster serves as cofactor. Requires FAD as cofactor. The cofactor is FMN.

The enzyme catalyses 5,6-dihydrouracil + NADP(+) = uracil + NADPH + H(+). It participates in amino-acid biosynthesis; beta-alanine biosynthesis. Involved in pyrimidine base degradation. Catalyzes the reduction of uracil and thymine. Also involved the degradation of the chemotherapeutic drug 5-fluorouracil. The chain is Probable dihydropyrimidine dehydrogenase [NADP(+)] from Caenorhabditis briggsae.